The following is a 165-amino-acid chain: Ribosome maturation factor RimM (165 aa).

In terms of domain architecture, PRC barrel spans E94–A165.

The protein belongs to the RimM family. As to quaternary structure, binds ribosomal protein uS19.

Its subcellular location is the cytoplasm. An accessory protein needed during the final step in the assembly of 30S ribosomal subunit, possibly for assembly of the head region. Essential for efficient processing of 16S rRNA. May be needed both before and after RbfA during the maturation of 16S rRNA. It has affinity for free ribosomal 30S subunits but not for 70S ribosomes. In Rickettsia conorii (strain ATCC VR-613 / Malish 7), this protein is Ribosome maturation factor RimM.